The sequence spans 198 residues: V-type ATP synthase subunit E (198 aa).

The protein belongs to the V-ATPase E subunit family.

Its function is as follows. Produces ATP from ADP in the presence of a proton gradient across the membrane. This is V-type ATP synthase subunit E from Clostridium perfringens (strain ATCC 13124 / DSM 756 / JCM 1290 / NCIMB 6125 / NCTC 8237 / Type A).